The primary structure comprises 923 residues: Isoleucine--tRNA ligase (923 aa).

A 'HIGH' region motif is present at residues 57–67 (PYANGHIHIGH). An L-isoleucyl-5'-AMP-binding site is contributed by E560. A 'KMSKS' region motif is present at residues 601-605 (KMSKS). K604 is a binding site for ATP. Residues C895, C898, C915, and C918 each coordinate Zn(2+).

The protein belongs to the class-I aminoacyl-tRNA synthetase family. IleS type 1 subfamily. Monomer. Zn(2+) is required as a cofactor.

The protein resides in the cytoplasm. It catalyses the reaction tRNA(Ile) + L-isoleucine + ATP = L-isoleucyl-tRNA(Ile) + AMP + diphosphate. In terms of biological role, catalyzes the attachment of isoleucine to tRNA(Ile). As IleRS can inadvertently accommodate and process structurally similar amino acids such as valine, to avoid such errors it has two additional distinct tRNA(Ile)-dependent editing activities. One activity is designated as 'pretransfer' editing and involves the hydrolysis of activated Val-AMP. The other activity is designated 'posttransfer' editing and involves deacylation of mischarged Val-tRNA(Ile). This is Isoleucine--tRNA ligase from Geobacter sulfurreducens (strain ATCC 51573 / DSM 12127 / PCA).